The primary structure comprises 562 residues: Aureusidin synthase (562 aa).

2 disulfides stabilise this stretch: cysteine 71/cysteine 86 and cysteine 85/cysteine 148. The Cu cation site is built by histidine 147, histidine 168, histidine 177, histidine 301, histidine 305, and histidine 335. Positions 151–168 (CAGAYNQAGFTNLKLQIH) form a cross-link, 2'-(S-cysteinyl)-histidine (Cys-His).

The protein belongs to the tyrosinase family. In terms of assembly, monomer. It depends on Cu(2+) as a cofactor. Post-translationally, glycosylated. Contains probably N- and C-terminal propeptides. Expressed in petals. Not detected in stems and leaves.

It localises to the vacuole lumen. The enzyme catalyses 2',4,4',6'-tetrahydroxychalcone 4'-O-beta-D-glucoside + O2 = aureusidin 6-O-beta-glucoside + H2O. It catalyses the reaction 2 2',3,4,4',6'-pentahydroxychalcone 4'-O-beta-D-glucoside + O2 + 2 H(+) = 2 aureusidin 6-O-beta-glucoside + 2 H2O. The catalysed reaction is 2',3,4,4',6'-pentahydroxychalcone 4'-O-beta-D-glucoside + O2 + H(+) = bracteatin 6-O-beta-glucoside + H2O. With respect to regulation, h(2)O(2) activates the 3-hydroxylation and oxidative cyclization of tetrahydroxychalcone but inhibits reaction with pentahydroxychalcone. Inhibited by phenylthiourea. In terms of biological role, involved in the biosynthesis of aurones, plant flavonoids that provide yellow coloration to flowers. Can use tetrahydroxychalcone (THC), pentahydroxychalcone (PHC), THC 4'-glucoside and PHC 4'-glucoside as substrates, but not 2'-hydroxychalcone, 4-hydroxychalcone, PHC 3-glucoside, 2',6'-dihydroxy-4,4'-dimethoxychalcone, naringenin, eriodictyol and 4,4',6-trihydroxyaurone. Can also produce bracteatin from PHC. The sequence is that of Aureusidin synthase (AS1) from Antirrhinum majus (Garden snapdragon).